The following is a 139-amino-acid chain: Nucleoside diphosphate kinase (139 aa).

Residues K10, F58, R86, T92, R104, and N114 each contribute to the ATP site. Catalysis depends on H117, which acts as the Pros-phosphohistidine intermediate.

The protein belongs to the NDK family. In terms of assembly, homotetramer. It depends on Mg(2+) as a cofactor.

It is found in the cytoplasm. The catalysed reaction is a 2'-deoxyribonucleoside 5'-diphosphate + ATP = a 2'-deoxyribonucleoside 5'-triphosphate + ADP. The enzyme catalyses a ribonucleoside 5'-diphosphate + ATP = a ribonucleoside 5'-triphosphate + ADP. Its function is as follows. Major role in the synthesis of nucleoside triphosphates other than ATP. The ATP gamma phosphate is transferred to the NDP beta phosphate via a ping-pong mechanism, using a phosphorylated active-site intermediate. In Rhodococcus erythropolis (strain PR4 / NBRC 100887), this protein is Nucleoside diphosphate kinase.